We begin with the raw amino-acid sequence, 552 residues long: 3-hydroxy-3-methylglutaryl-coenzyme A reductase 1 (552 aa).

Composition is skewed to low complexity over residues 79–99 (QHNQ…QQPQ) and 112–122 (QQQQQQQQQQQ). Residues 79–138 (QHNQQQQQKQQPSQDYIQQPQNDNNINSGKEQEQQQQQQQQQQQTPDITNQPTKTNKKIP) are disordered. A compositionally biased stretch (polar residues) spans 123-132 (TPDITNQPTK). Glutamate 237 acts as the Charge relay system in catalysis. A glycan (N-linked (GlcNAc...) asparagine) is linked at asparagine 288. Lysine 369 acts as the Charge relay system in catalysis. Residue asparagine 375 is glycosylated (N-linked (GlcNAc...) asparagine). Aspartate 445 serves as the catalytic Charge relay system. Catalysis depends on histidine 543, which acts as the Proton donor.

Belongs to the HMG-CoA reductase family.

It is found in the endoplasmic reticulum membrane. It catalyses the reaction (R)-mevalonate + 2 NADP(+) + CoA = (3S)-3-hydroxy-3-methylglutaryl-CoA + 2 NADPH + 2 H(+). It participates in metabolic intermediate biosynthesis; (R)-mevalonate biosynthesis; (R)-mevalonate from acetyl-CoA: step 3/3. In terms of biological role, this transmembrane glycoprotein is involved in the control of cholesterol biosynthesis. It is the rate-limiting enzyme of the sterol biosynthesis. This is 3-hydroxy-3-methylglutaryl-coenzyme A reductase 1 (hmgA) from Dictyostelium discoideum (Social amoeba).